A 283-amino-acid chain; its full sequence is 5'-nucleotidase SurE (283 aa).

Positions 14, 15, 47, and 105 each coordinate a divalent metal cation.

This sequence belongs to the SurE nucleotidase family. A divalent metal cation serves as cofactor.

The protein resides in the cytoplasm. The catalysed reaction is a ribonucleoside 5'-phosphate + H2O = a ribonucleoside + phosphate. In terms of biological role, nucleotidase that shows phosphatase activity on nucleoside 5'-monophosphates. The sequence is that of 5'-nucleotidase SurE from Chlamydia muridarum (strain MoPn / Nigg).